The sequence spans 281 residues: Pantothenate synthetase (281 aa).

Residue Met-30 to His-37 participates in ATP binding. The active-site Proton donor is His-37. Gln-61 lines the (R)-pantoate pocket. Gln-61 is a binding site for beta-alanine. Gly-149–Asp-152 provides a ligand contact to ATP. Position 155 (Gln-155) interacts with (R)-pantoate. ATP contacts are provided by residues Ile-178 and Met-186–Arg-189.

The protein belongs to the pantothenate synthetase family. Homodimer.

It localises to the cytoplasm. It catalyses the reaction (R)-pantoate + beta-alanine + ATP = (R)-pantothenate + AMP + diphosphate + H(+). The protein operates within cofactor biosynthesis; (R)-pantothenate biosynthesis; (R)-pantothenate from (R)-pantoate and beta-alanine: step 1/1. In terms of biological role, catalyzes the condensation of pantoate with beta-alanine in an ATP-dependent reaction via a pantoyl-adenylate intermediate. The protein is Pantothenate synthetase of Shewanella baltica (strain OS223).